Here is a 355-residue protein sequence, read N- to C-terminus: MSVQRPIRVLVVDDSPTMANMLTALLTEEPRIEVVGRAGDGNRAVQLARLLRPDVITMDLLLPGLDGPGAIAAIMSQSPARILVVSAVAEQRGVDLGFQAMSAGALELIGKPNVTNAEELRRWGKELAHSVCLMAEVPVISRRPRAATAPPPPTGARVDIFGVVASTGGPPALADVLSKLPRSLPVPLLIAQHITVGFTQGMVRWLSQVTPLPVSIAKDGERLEPGRVYFPLDGHDLLVDAAGLARLQPSQGGPCPSGDVMLTSLAAAFGRRSGGVVLTGMGEDGARGLLAIRRAGGVTFSQDEASSVVFGMPRAALDVKATDQGVPLASMPELILQSCTFAPFRGGRPEGGPTR.

One can recognise a Response regulatory domain in the interval 8-126 (RVLVVDDSPT…AEELRRWGKE (119 aa)). Asp59 is modified (4-aspartylphosphate). The 186-residue stretch at 152–337 (PPTGARVDIF…LASMPELILQ (186 aa)) folds into the CheB-type methylesterase domain. Catalysis depends on residues Ser166, His193, and Asp284.

It belongs to the CheB family. Phosphorylated by CheA. Phosphorylation of the N-terminal regulatory domain activates the methylesterase activity.

Its subcellular location is the cytoplasm. The catalysed reaction is [protein]-L-glutamate 5-O-methyl ester + H2O = L-glutamyl-[protein] + methanol + H(+). The enzyme catalyses L-glutaminyl-[protein] + H2O = L-glutamyl-[protein] + NH4(+). In terms of biological role, involved in chemotaxis. Part of a chemotaxis signal transduction system that modulates chemotaxis in response to various stimuli. Catalyzes the demethylation of specific methylglutamate residues introduced into the chemoreceptors (methyl-accepting chemotaxis proteins or MCP) by CheR. Also mediates the irreversible deamidation of specific glutamine residues to glutamic acid. The chain is Protein-glutamate methylesterase/protein-glutamine glutaminase 3 from Myxococcus xanthus (strain DK1622).